The sequence spans 256 residues: ATP-dependent dethiobiotin synthetase BioD (256 aa).

ATP is bound at residue 13 to 18; it reads EVGKTY. Thr-17 serves as a coordination point for Mg(2+). Lys-38 is a catalytic residue. Ser-42 provides a ligand contact to substrate. ATP-binding positions include Asp-56, 118-121, and 187-188; these read EGAG and NR. Residues Asp-56 and Glu-118 each coordinate Mg(2+).

It belongs to the dethiobiotin synthetase family. Homodimer. It depends on Mg(2+) as a cofactor.

Its subcellular location is the cytoplasm. The enzyme catalyses (7R,8S)-7,8-diammoniononanoate + CO2 + ATP = (4R,5S)-dethiobiotin + ADP + phosphate + 3 H(+). It participates in cofactor biosynthesis; biotin biosynthesis; biotin from 7,8-diaminononanoate: step 1/2. Functionally, catalyzes a mechanistically unusual reaction, the ATP-dependent insertion of CO2 between the N7 and N8 nitrogen atoms of 7,8-diaminopelargonic acid (DAPA, also called 7,8-diammoniononanoate) to form a ureido ring. The sequence is that of ATP-dependent dethiobiotin synthetase BioD from Rhodopirellula baltica (strain DSM 10527 / NCIMB 13988 / SH1).